The chain runs to 194 residues: Recombination protein RecR (194 aa).

Residues 52 to 67 (CTECRTFTEEEVCHIC) form a C4-type zinc finger. One can recognise a Toprim domain in the interval 76 to 171 (GQICVVESPA…EASRIAHGVP (96 aa)).

It belongs to the RecR family.

Functionally, may play a role in DNA repair. It seems to be involved in an RecBC-independent recombinational process of DNA repair. It may act with RecF and RecO. The sequence is that of Recombination protein RecR from Vibrio campbellii (strain ATCC BAA-1116).